A 282-amino-acid polypeptide reads, in one-letter code: ATP phosphoribosyltransferase (282 aa).

This sequence belongs to the ATP phosphoribosyltransferase family. Long subfamily. Requires Mg(2+) as cofactor.

The protein resides in the cytoplasm. It catalyses the reaction 1-(5-phospho-beta-D-ribosyl)-ATP + diphosphate = 5-phospho-alpha-D-ribose 1-diphosphate + ATP. The protein operates within amino-acid biosynthesis; L-histidine biosynthesis; L-histidine from 5-phospho-alpha-D-ribose 1-diphosphate: step 1/9. Its activity is regulated as follows. Feedback inhibited by histidine. Its function is as follows. Catalyzes the condensation of ATP and 5-phosphoribose 1-diphosphate to form N'-(5'-phosphoribosyl)-ATP (PR-ATP). Has a crucial role in the pathway because the rate of histidine biosynthesis seems to be controlled primarily by regulation of HisG enzymatic activity. In Pyrobaculum islandicum (strain DSM 4184 / JCM 9189 / GEO3), this protein is ATP phosphoribosyltransferase.